The chain runs to 151 residues: Ribosomal RNA large subunit methyltransferase H (151 aa).

Residues G100 and 119-124 each bind S-adenosyl-L-methionine; that span reads LSKMTF.

It belongs to the RNA methyltransferase RlmH family. Homodimer.

The protein resides in the cytoplasm. It carries out the reaction pseudouridine(1915) in 23S rRNA + S-adenosyl-L-methionine = N(3)-methylpseudouridine(1915) in 23S rRNA + S-adenosyl-L-homocysteine + H(+). Its function is as follows. Specifically methylates the pseudouridine at position 1915 (m3Psi1915) in 23S rRNA. In Thermotoga maritima (strain ATCC 43589 / DSM 3109 / JCM 10099 / NBRC 100826 / MSB8), this protein is Ribosomal RNA large subunit methyltransferase H.